The following is a 473-amino-acid chain: Adenosylhomocysteinase (473 aa).

The substrate site is built by T60, D135, and E197. 198-200 (TTT) is a binding site for NAD(+). K227 and D231 together coordinate substrate. Residues N232, 261 to 266 (GFGDVG), E284, N319, 340 to 342 (IGH), and N385 contribute to the NAD(+) site.

The protein belongs to the adenosylhomocysteinase family. Requires NAD(+) as cofactor.

It localises to the cytoplasm. It carries out the reaction S-adenosyl-L-homocysteine + H2O = L-homocysteine + adenosine. The protein operates within amino-acid biosynthesis; L-homocysteine biosynthesis; L-homocysteine from S-adenosyl-L-homocysteine: step 1/1. Functionally, may play a key role in the regulation of the intracellular concentration of adenosylhomocysteine. The polypeptide is Adenosylhomocysteinase (Bradyrhizobium sp. (strain BTAi1 / ATCC BAA-1182)).